The sequence spans 321 residues: MFDFRPFYQQIATSTLSAWLETLPLQLKQWEKQTHGDYIKWSKIIDFLPHLTADHIDLKSAVKAETKTPLSSGERQRIIHHLKQLMPWRKGPYHLYGIHIDCEWRSDFKWERVLPHLAPLQNRLVLDVGCGSGYHMWRMVGEGAKMVVGIDPTELFLCQFEAVRKLLNNDRRANLIPLGIEEMQPLAAFDTVFSMGVLYHRKSPLDHLTQLKNQLVKDGELVLETLVVEGDINTILVPTDRYAKMKNVYFIPSVLALINWLEKCGFHNIRCVDVETTGLEEQRKTDWLENESLIDFLNPQDHSKTIEGYPAPKRAVILANK.

Carboxy-S-adenosyl-L-methionine contacts are provided by residues Lys90, Trp104, Lys109, Gly129, 151-153, 180-181, Met195, Tyr199, and Arg314; these read DPT and IE.

This sequence belongs to the class I-like SAM-binding methyltransferase superfamily. CmoB family. As to quaternary structure, homotetramer.

It carries out the reaction carboxy-S-adenosyl-L-methionine + 5-hydroxyuridine(34) in tRNA = 5-carboxymethoxyuridine(34) in tRNA + S-adenosyl-L-homocysteine + H(+). Its function is as follows. Catalyzes carboxymethyl transfer from carboxy-S-adenosyl-L-methionine (Cx-SAM) to 5-hydroxyuridine (ho5U) to form 5-carboxymethoxyuridine (cmo5U) at position 34 in tRNAs. In Histophilus somni (strain 2336) (Haemophilus somnus), this protein is tRNA U34 carboxymethyltransferase.